The primary structure comprises 357 residues: tRNA N6-adenosine threonylcarbamoyltransferase (357 aa).

Residues His115 and His119 each contribute to the Fe cation site. Substrate-binding positions include 137–141 (LASGG), Asp170, Gly183, and Asn281. Asp309 serves as a coordination point for Fe cation.

It belongs to the KAE1 / TsaD family. The cofactor is Fe(2+).

The protein localises to the cytoplasm. The enzyme catalyses L-threonylcarbamoyladenylate + adenosine(37) in tRNA = N(6)-L-threonylcarbamoyladenosine(37) in tRNA + AMP + H(+). Its function is as follows. Required for the formation of a threonylcarbamoyl group on adenosine at position 37 (t(6)A37) in tRNAs that read codons beginning with adenine. Is involved in the transfer of the threonylcarbamoyl moiety of threonylcarbamoyl-AMP (TC-AMP) to the N6 group of A37, together with TsaE and TsaB. TsaD likely plays a direct catalytic role in this reaction. This chain is tRNA N6-adenosine threonylcarbamoyltransferase, found in Nitrobacter winogradskyi (strain ATCC 25391 / DSM 10237 / CIP 104748 / NCIMB 11846 / Nb-255).